A 277-amino-acid chain; its full sequence is MGLLECCARCLIGAPFASLVATGLCFFGVALFCGCGHEALTGTEQLIETYFSKNYQDYEYLIDVIHAFQYVIYGTASFFFLYGALLLAEGFYTTGAVRQIFGDYRTTICGKGLSATVTGGPKGRGARGPQRAHSLQRVCQCLGKWLGHPDKFVGITYVLTIVWLLAFACSAVPVYIYFNTWTTCQSIAFPTKTTASIGTLCADARMYGVLPWNAFPGKVCGSNLLSICKTSEFQMTFHLFIAAFVGAAATLVSLLTFMIAATYNFAVLKLMGRGTKF.

Over 2 to 10 (GLLECCARC) the chain is Cytoplasmic. 3 S-palmitoyl cysteine lipidation sites follow: C6, C7, and C10. Residues 11–36 (LIGAPFASLVATGLCFFGVALFCGCG) form a helical membrane-spanning segment. The Extracellular portion of the chain corresponds to 37–59 (HEALTGTEQLIETYFSKNYQDYE). Residues 60–88 (YLIDVIHAFQYVIYGTASFFFLYGALLLA) traverse the membrane as a helical segment. The Cytoplasmic portion of the chain corresponds to 89 to 151 (EGFYTTGAVR…LGKWLGHPDK (63 aa)). S-palmitoyl cysteine attachment occurs at residues C109, C139, and C141. A helical transmembrane segment spans residues 152-178 (FVGITYVLTIVWLLAFACSAVPVYIYF). Topologically, residues 179–238 (NTWTTCQSIAFPTKTTASIGTLCADARMYGVLPWNAFPGKVCGSNLLSICKTSEFQMTFH) are extracellular. Disulfide bonds link C184–C228 and C201–C220. A lipid anchor (O-palmitoyl threonine) is attached at T199. A helical transmembrane segment spans residues 239 to 268 (LFIAAFVGAAATLVSLLTFMIAATYNFAVL). Topologically, residues 269 to 277 (KLMGRGTKF) are cytoplasmic.

Belongs to the myelin proteolipid protein family.

It is found in the cell membrane. In terms of biological role, this is the major myelin protein from the central nervous system. It plays an important role in the formation or maintenance of the multilamellar structure of myelin. The polypeptide is Myelin proteolipid protein (PLP1) (Gallus gallus (Chicken)).